A 136-amino-acid polypeptide reads, in one-letter code: Peptide methionine sulfoxide reductase MsrB (136 aa).

Positions 9–136 (DAEWKALLAE…NSASLDFKPK (128 aa)) constitute a MsrB domain. Residues C53, C56, C102, and C105 each coordinate Zn(2+). Residue C125 is the Nucleophile of the active site.

The protein belongs to the MsrB Met sulfoxide reductase family. It depends on Zn(2+) as a cofactor.

It catalyses the reaction L-methionyl-[protein] + [thioredoxin]-disulfide + H2O = L-methionyl-(R)-S-oxide-[protein] + [thioredoxin]-dithiol. This chain is Peptide methionine sulfoxide reductase MsrB, found in Polaromonas sp. (strain JS666 / ATCC BAA-500).